The sequence spans 495 residues: SKA complex subunit 3 (495 aa).

A compositionally biased stretch (basic and acidic residues) spans 119–135 (TKEAEERAERDAEKLDA). Residues 119–165 (TKEAEERAERDAEKLDAAEEDEETERGDCDKVDQSVTPEKMPPPVDQ) form a disordered region. Ser295 is subject to Phosphoserine. Over residues 355 to 368 (KEDREEESKIHSES) the composition is skewed to basic and acidic residues. A disordered region spans residues 355–391 (KEDREEESKIHSESQENSLRLPDLSTTNGTSWNDAPE). A compositionally biased stretch (polar residues) spans 378-387 (LSTTNGTSWN).

The protein belongs to the SKA3 family. As to quaternary structure, component of the SKA complex, composed of ska1, ska2 and ska3.

It is found in the cytoplasm. The protein localises to the cytoskeleton. It localises to the spindle. The protein resides in the chromosome. Its subcellular location is the centromere. It is found in the kinetochore. In terms of biological role, component of the SKA complex, a microtubule plus end-binding complex of the outer kinetochore that stabilizes spindle microtubule-kinetochore attachments, promotes alignment of chromosomes at the mitotic spindle equator (chromosome congression) and assists suppression of the spindle assembly checkpoint. Kinetochores, consisting of a centromere-associated inner segment and a microtubule-contacting outer segment, play a crucial role in chromosome segregation by mediating the physical connection between centromeric DNA and spindle microtubules. The outer kinetochore is made up of the ten-subunit KMN network complex, comprising the MIS12, NDC80 and KNL1 complexes, and auxiliary microtubule-associated components such as the SKA complex; together they connect the outer kinetochore with the inner kinetochore, bind microtubules, and mediate interactions with mitotic checkpoint proteins that delay anaphase until chromosomes are bioriented on the spindle. The SKA complex is loaded onto bioriented kinetochores and it facilitates chromosome congression by stabilizing microtubules, and end-on attachment of the NDC80 complex to depolymerizing spindle microtubules, thereby assisting the poleward-moving kinetochore in withstanding microtubule pulling forces. The complex associates with dynamic microtubule plus-ends and can track both depolymerizing and elongating microtubules. The complex recruits protein phosphatase 1 (PP1) to the kinetochore in prometaphase and metaphase, to oppose spindle assembly checkpoint signaling and promote the onset of anaphase. Within the complex, binds microtubules but with a much lower affinity than SKA1. During meiosis the SKA complex stabilizes the meiotic spindle and is required for its migration to the cortex. The polypeptide is SKA complex subunit 3 (ska3) (Danio rerio (Zebrafish)).